An 886-amino-acid chain; its full sequence is Extended synaptotagmin-3 (886 aa).

The tract at residues 1 to 21 (MRAEEPCAPGAPSALGAQRTP) is disordered. At 1-29 (MRAEEPCAPGAPSALGAQRTPGPELRLSS) the chain is on the cytoplasmic side. The next 2 helical transmembrane spans lie at 30–50 (QLLP…GPVY) and 51–71 (LAGY…LWMW). The Cytoplasmic segment spans residues 72-886 (WRRNRRGKLG…ELTPNGQPRS (815 aa)). The 178-residue stretch at 114–291 (DVERVEWANK…LPNRVTVPVK (178 aa)) folds into the SMP-LTD domain. C2 domains are found at residues 291 to 408 (KKGL…DEWF) and 426 to 566 (SLLT…QLDH). Positions 321, 322, 332, 379, 380, 381, 383, 385, and 386 each coordinate Ca(2+). The tract at residues 613 to 673 (QGPKAQPQEE…PEPKGKDSAK (61 aa)) is disordered. Low complexity predominate over residues 642–659 (RSTTTTTSATTVATEPTS). The span at 664-673 (PEPKGKDSAK) shows a compositional bias: basic and acidic residues. The C2 3 domain maps to 754–876 (QLGEIQLTVR…DLIKGFSQWY (123 aa)). The tract at residues 801-808 (RKWACRKK) is required for phosphatidylinositol 4,5-bisphosphate-dependent location at the cell membrane.

It belongs to the extended synaptotagmin family. Interacts with ESYT1 and ESYT2. As to expression, widely expressed with high level in cerebellum and skin.

It is found in the cell membrane. It localises to the endoplasmic reticulum membrane. Functionally, binds glycerophospholipids in a barrel-like domain and may play a role in cellular lipid transport. Tethers the endoplasmic reticulum to the cell membrane and promotes the formation of appositions between the endoplasmic reticulum and the cell membrane. The chain is Extended synaptotagmin-3 from Homo sapiens (Human).